A 92-amino-acid polypeptide reads, in one-letter code: Small ribosomal subunit protein bS18 (92 aa).

Positions 1 to 28 (MTQQGNSGERKPRGKGPKRPRKPKVDPF) are disordered. The span at 12-22 (PRGKGPKRPRK) shows a compositional bias: basic residues.

Belongs to the bacterial ribosomal protein bS18 family. Part of the 30S ribosomal subunit. Forms a tight heterodimer with protein bS6.

Its function is as follows. Binds as a heterodimer with protein bS6 to the central domain of the 16S rRNA, where it helps stabilize the platform of the 30S subunit. The polypeptide is Small ribosomal subunit protein bS18 (Deinococcus radiodurans (strain ATCC 13939 / DSM 20539 / JCM 16871 / CCUG 27074 / LMG 4051 / NBRC 15346 / NCIMB 9279 / VKM B-1422 / R1)).